A 415-amino-acid polypeptide reads, in one-letter code: Peptide chain release factor subunit 1 (415 aa).

Belongs to the eukaryotic release factor 1 family. Heterodimer of two subunits, one of which binds GTP.

The protein localises to the cytoplasm. Functionally, directs the termination of nascent peptide synthesis (translation) in response to the termination codons UAA, UAG and UGA. This is Peptide chain release factor subunit 1 from Thermococcus sibiricus (strain DSM 12597 / MM 739).